The sequence spans 476 residues: Bifunctional protein GlmU (476 aa).

The pyrophosphorylase stretch occupies residues 1 to 235 (MTALDIIIMA…ALQVAGVNSP (235 aa)). UDP-N-acetyl-alpha-D-glucosamine-binding positions include Lys-23, Gln-81, 86–87 (GT), 108–110 (SGD), Gly-145, Glu-160, and Asn-233. Asp-110 contacts Mg(2+). Mg(2+) is bound at residue Asn-233. Residues 236-256 (AQLAELERAHQRAQAAALMEQ) form a linker region. An N-acetyltransferase region spans residues 257–476 (GVRLADPARF…WKRPAKQAKG (220 aa)). 2 residues coordinate UDP-N-acetyl-alpha-D-glucosamine: Arg-351 and Lys-369. His-381 serves as the catalytic Proton acceptor. UDP-N-acetyl-alpha-D-glucosamine is bound by residues Tyr-384 and Asn-395. Acetyl-CoA contacts are provided by residues Ala-398, 404–405 (NY), Ser-423, Gly-441, and Arg-458.

This sequence in the N-terminal section; belongs to the N-acetylglucosamine-1-phosphate uridyltransferase family. It in the C-terminal section; belongs to the transferase hexapeptide repeat family. In terms of assembly, homotrimer. The cofactor is Mg(2+).

It is found in the cytoplasm. The enzyme catalyses alpha-D-glucosamine 1-phosphate + acetyl-CoA = N-acetyl-alpha-D-glucosamine 1-phosphate + CoA + H(+). It carries out the reaction N-acetyl-alpha-D-glucosamine 1-phosphate + UTP + H(+) = UDP-N-acetyl-alpha-D-glucosamine + diphosphate. The protein operates within nucleotide-sugar biosynthesis; UDP-N-acetyl-alpha-D-glucosamine biosynthesis; N-acetyl-alpha-D-glucosamine 1-phosphate from alpha-D-glucosamine 6-phosphate (route II): step 2/2. It functions in the pathway nucleotide-sugar biosynthesis; UDP-N-acetyl-alpha-D-glucosamine biosynthesis; UDP-N-acetyl-alpha-D-glucosamine from N-acetyl-alpha-D-glucosamine 1-phosphate: step 1/1. Its pathway is bacterial outer membrane biogenesis; LPS lipid A biosynthesis. In terms of biological role, catalyzes the last two sequential reactions in the de novo biosynthetic pathway for UDP-N-acetylglucosamine (UDP-GlcNAc). The C-terminal domain catalyzes the transfer of acetyl group from acetyl coenzyme A to glucosamine-1-phosphate (GlcN-1-P) to produce N-acetylglucosamine-1-phosphate (GlcNAc-1-P), which is converted into UDP-GlcNAc by the transfer of uridine 5-monophosphate (from uridine 5-triphosphate), a reaction catalyzed by the N-terminal domain. The sequence is that of Bifunctional protein GlmU from Acidovorax ebreus (strain TPSY) (Diaphorobacter sp. (strain TPSY)).